Reading from the N-terminus, the 261-residue chain is Small ribosomal subunit protein eS1A (261 aa).

The span at 1–18 (MTLGKNKRISKGGKRGKK) shows a compositional bias: basic residues. Residues 1–23 (MTLGKNKRISKGGKRGKKKTQET) form a disordered region.

The protein belongs to the eukaryotic ribosomal protein eS1 family. In terms of assembly, component of the small ribosomal subunit. Mature ribosomes consist of a small (40S) and a large (60S) subunit. The 40S subunit contains about 33 different proteins and 1 molecule of RNA (18S). The 60S subunit contains about 49 different proteins and 3 molecules of RNA (25S, 5.8S and 5S).

Its subcellular location is the cytoplasm. The protein is Small ribosomal subunit protein eS1A of Trypanosoma cruzi (strain CL Brener).